The sequence spans 165 residues: Phosphopantetheine adenylyltransferase (165 aa).

Substrate is bound at residue T9. ATP contacts are provided by residues 9 to 10 (TF) and H17. Residues K41, L73, and R87 each contribute to the substrate site. Residues 88–90 (GLR), E98, and 123–129 (YQFISGT) contribute to the ATP site.

This sequence belongs to the bacterial CoaD family. In terms of assembly, homohexamer. Requires Mg(2+) as cofactor.

The protein localises to the cytoplasm. It carries out the reaction (R)-4'-phosphopantetheine + ATP + H(+) = 3'-dephospho-CoA + diphosphate. It participates in cofactor biosynthesis; coenzyme A biosynthesis; CoA from (R)-pantothenate: step 4/5. Functionally, reversibly transfers an adenylyl group from ATP to 4'-phosphopantetheine, yielding dephospho-CoA (dPCoA) and pyrophosphate. This Burkholderia vietnamiensis (strain G4 / LMG 22486) (Burkholderia cepacia (strain R1808)) protein is Phosphopantetheine adenylyltransferase.